The chain runs to 414 residues: tRNA dimethylallyltransferase (414 aa).

Residue 33–40 participates in ATP binding; it reads APTASGKT. 35–40 provides a ligand contact to substrate; sequence TASGKT. 3 interaction with substrate tRNA regions span residues 58–61, 182–186, and 266–271; these read DSAL, QRITR, and RCVGYR.

Belongs to the IPP transferase family. Monomer. Requires Mg(2+) as cofactor.

The catalysed reaction is adenosine(37) in tRNA + dimethylallyl diphosphate = N(6)-dimethylallyladenosine(37) in tRNA + diphosphate. In terms of biological role, catalyzes the transfer of a dimethylallyl group onto the adenine at position 37 in tRNAs that read codons beginning with uridine, leading to the formation of N6-(dimethylallyl)adenosine (i(6)A). This is tRNA dimethylallyltransferase from Psychrobacter arcticus (strain DSM 17307 / VKM B-2377 / 273-4).